Reading from the N-terminus, the 763-residue chain is MEKIRVYELAKQLNVSTKDLMSKLKDNKIEVKSHMSTLDKDQIAKVKSFYEKQKKVQTSQNNSKSNDENKKITNKNTEKTTEKISTVDSNKQNNSNKRFKPKHPRNNDEESVSHFDKIKHKNKSEMNEKRDLNDKKKNKNFKNTKNKNSNNNKNSKNNKNNKNNDHNRKDEAIKHETKEPKKFIIQPTITVKDLSEKISVSISELIMKLMELGIMANQNQEIDFDTASLVAGEFDVIVEQDEVEDFDDDDVFNLDFEDKKEDLKERPPVITVMGHVDHGKTSILDRIRNSRVAGREAGGITQHIGAYTIRVNDKKIVFLDTPGHEAFTAMRSRGAQVTDVSILVVAADDGVMPQTIEAINHSKAAGVPIIVAINKIDKENANIERVKTELAENGLVPEDWGGDTVLVPVSARTGEGIDDLLEMILMVAEMEELKANPNRLAVGTVIEAQLDKGRGPTATILVQKGTLKHSDMVFSGQASGRIRAMFNDQGKQVKKAGPSTPVLILGLNEVPEAGDMIYAVKDEKEARNYAQKIKDHNREEQIKSSSTMNLDELFGKISDGETKDLNIIIKTDVKGTIDAIKQSLIKLSNEEVKVNIIHGAVGGITESDVNLASASSAIIIGFNVRPTQVAMDMAKNESIEIRTYRVIYDAIEDVKNAITGMLKPQYQEEVLGRATVRDTFKVPGVGTVAGVYVNTGKVTRNATVRLLRDEILIFEGPVSSLKRYKDDVKELTQGYEGGMGLENYNDIKPGDVLEAYVLNEVQR.

The interval 52–178 (KQKKVQTSQN…KDEAIKHETK (127 aa)) is disordered. The segment covering 65–82 (SNDENKKITNKNTEKTTE) has biased composition (basic and acidic residues). The span at 86 to 96 (TVDSNKQNNSN) shows a compositional bias: polar residues. Basic and acidic residues-rich tracts occupy residues 105–116 (RNNDEESVSHFD) and 123–135 (KSEM…LNDK). The segment covering 136 to 145 (KKNKNFKNTK) has biased composition (basic residues). Residues 146–161 (NKNSNNNKNSKNNKNN) are compositionally biased toward low complexity. Residues 162 to 178 (KNNDHNRKDEAIKHETK) show a composition bias toward basic and acidic residues. In terms of domain architecture, tr-type G spans 265–434 (ERPPVITVMG…LMVAEMEELK (170 aa)). A G1 region spans residues 274–281 (GHVDHGKT). Position 274–281 (274–281 (GHVDHGKT)) interacts with GTP. Residues 299-303 (GITQH) are G2. Residues 320-323 (DTPG) are G3. Residues 320-324 (DTPGH) and 374-377 (NKID) contribute to the GTP site. The interval 374–377 (NKID) is G4. Residues 410–412 (SAR) form a G5 region.

It belongs to the TRAFAC class translation factor GTPase superfamily. Classic translation factor GTPase family. IF-2 subfamily.

The protein localises to the cytoplasm. Functionally, one of the essential components for the initiation of protein synthesis. Protects formylmethionyl-tRNA from spontaneous hydrolysis and promotes its binding to the 30S ribosomal subunits. Also involved in the hydrolysis of GTP during the formation of the 70S ribosomal complex. This chain is Translation initiation factor IF-2, found in Finegoldia magna (strain ATCC 29328 / DSM 20472 / WAL 2508) (Peptostreptococcus magnus).